Reading from the N-terminus, the 538-residue chain is D-alanyl-D-alanine carboxypeptidase (538 aa).

The segment at 1–21 (MKQSSPEPLRPRRTGGRGGAR) is disordered. The first 49 residues, 1-49 (MKQSSPEPLRPRRTGGRGGARRAAALVTIPLLPMTLLGASPALADASGA), serve as a signal peptide directing secretion. The active-site Acyl-ester intermediate is Ser-98. The active-site Proton acceptor is Lys-101. The segment at 146–319 (TLSAEDLDAM…KGDVGLGGVP (174 aa)) is absent in class-A beta-lactamases. The active site involves Ser-347. Substrate is bound at residue Lys-459. A propeptide spans 516 to 538 (GARMMRGPVQGSGELECSWVQAC) (removed in mature form).

The protein belongs to the peptidase S13 family.

The protein resides in the secreted. The catalysed reaction is Preferential cleavage: (Ac)2-L-Lys-D-Ala-|-D-Ala. Also transpeptidation of peptidyl-alanyl moieties that are N-acyl substituents of D-alanine.. The protein operates within cell wall biogenesis; peptidoglycan biosynthesis. Its activity is regulated as follows. Inhibited by benzylpenicillin, cephaloridine, ampicillin and cetiofur. In terms of biological role, removes C-terminal D-alanyl residues from sugar-peptide cell wall precursors. The polypeptide is D-alanyl-D-alanine carboxypeptidase (dac) (Actinomadura sp. (strain R39)).